Here is a 294-residue protein sequence, read N- to C-terminus: Probable 2-(5''-triphosphoribosyl)-3'-dephosphocoenzyme-A synthase (294 aa).

Belongs to the CitG/MdcB family.

It carries out the reaction 3'-dephospho-CoA + ATP = 2'-(5''-triphospho-alpha-D-ribosyl)-3'-dephospho-CoA + adenine. This is Probable 2-(5''-triphosphoribosyl)-3'-dephosphocoenzyme-A synthase from Streptococcus equi subsp. zooepidemicus (strain MGCS10565).